The following is a 445-amino-acid chain: Phosphoglucosamine mutase 1 (445 aa).

The Phosphoserine intermediate role is filled by serine 102. Mg(2+)-binding residues include serine 102, aspartate 241, aspartate 243, and aspartate 245. Serine 102 carries the phosphoserine modification.

Belongs to the phosphohexose mutase family. It depends on Mg(2+) as a cofactor. In terms of processing, activated by phosphorylation.

It carries out the reaction alpha-D-glucosamine 1-phosphate = D-glucosamine 6-phosphate. Functionally, catalyzes the conversion of glucosamine-6-phosphate to glucosamine-1-phosphate. This chain is Phosphoglucosamine mutase 1, found in Shewanella sp. (strain MR-4).